The chain runs to 323 residues: Protease Do-like 5, chloroplastic (323 aa).

A chloroplast-targeting transit peptide spans 1–28 (MTMALASSKAFSSIFNTLSPINQSKFVL). The transit peptide at 29–73 (ACSGSNHVDVIDRRRRIMIFGSSLALTSSLLGSNQQRLPMESAIA) directs the protein to the thylakoid. Residues histidine 147, aspartate 188, and serine 266 each act as charge relay system in the active site. Residues 186–283 (DNDLAVLKIE…YGHTIGVNTA (98 aa)) are serine protease.

The protein belongs to the peptidase S1C family.

The protein resides in the plastid. It is found in the chloroplast thylakoid lumen. Its function is as follows. Probable serine protease. This chain is Protease Do-like 5, chloroplastic (DEGP5), found in Arabidopsis thaliana (Mouse-ear cress).